The sequence spans 412 residues: Multifunctional CCA protein (412 aa).

2 residues coordinate ATP: Gly-8 and Arg-11. Residues Gly-8 and Arg-11 each coordinate CTP. Asp-21 and Asp-23 together coordinate Mg(2+). ATP contacts are provided by Arg-91, Arg-137, and Arg-140. CTP contacts are provided by Arg-91, Arg-137, and Arg-140. One can recognise an HD domain in the interval 228 to 329 (TGIHTLMTLS…VKLFDSIDAW (102 aa)).

The protein belongs to the tRNA nucleotidyltransferase/poly(A) polymerase family. Bacterial CCA-adding enzyme type 1 subfamily. Monomer. Can also form homodimers and oligomers. Mg(2+) is required as a cofactor. Requires Ni(2+) as cofactor.

The enzyme catalyses a tRNA precursor + 2 CTP + ATP = a tRNA with a 3' CCA end + 3 diphosphate. The catalysed reaction is a tRNA with a 3' CCA end + 2 CTP + ATP = a tRNA with a 3' CCACCA end + 3 diphosphate. Functionally, catalyzes the addition and repair of the essential 3'-terminal CCA sequence in tRNAs without using a nucleic acid template. Adds these three nucleotides in the order of C, C, and A to the tRNA nucleotide-73, using CTP and ATP as substrates and producing inorganic pyrophosphate. tRNA 3'-terminal CCA addition is required both for tRNA processing and repair. Also involved in tRNA surveillance by mediating tandem CCA addition to generate a CCACCA at the 3' terminus of unstable tRNAs. While stable tRNAs receive only 3'-terminal CCA, unstable tRNAs are marked with CCACCA and rapidly degraded. The polypeptide is Multifunctional CCA protein (Escherichia coli O127:H6 (strain E2348/69 / EPEC)).